Consider the following 358-residue polypeptide: Molybdenum import ATP-binding protein ModC (358 aa).

An ABC transporter domain is found at 3-228; that stretch reads INVKQKLGDL…LEMRPWLPAK (226 aa). 30–37 is a binding site for ATP; sequence GRSGAGKT. A Mop domain is found at 289–356; that stretch reads QTSIRNVLLA…IKGVSVTKDD (68 aa).

It belongs to the ABC transporter superfamily. Molybdate importer (TC 3.A.1.8) family. The complex is composed of two ATP-binding proteins (ModC), two transmembrane proteins (ModB) and a solute-binding protein (ModA).

Its subcellular location is the cell inner membrane. It catalyses the reaction molybdate(out) + ATP + H2O = molybdate(in) + ADP + phosphate + H(+). Part of the ABC transporter complex ModABC involved in molybdenum import. Responsible for energy coupling to the transport system. The chain is Molybdenum import ATP-binding protein ModC from Photobacterium profundum (strain SS9).